We begin with the raw amino-acid sequence, 566 residues long: Lamin-1 (566 aa).

The segment at 1–37 is disordered; sequence MSSRKGTRSSRIVTLERSANSSLSNNGGGDDSFGSTL. N-acetylserine is present on S2. The segment at 13–47 is head; sequence VTLERSANSSLSNNGGGDDSFGSTLLETSRLQEKD. Positions 45-387 constitute an IF rod domain; the sequence is EKDHLTSLNS…ALLEGEEERL (343 aa). Residues 48–82 form a coil 1A region; it reads HLTSLNSRLATYIDKVRQLEQENNRLQVQIRDIEV. Positions 83 to 94 are linker 1; it reads VEKKEKSNLADR. A coil 1B region spans residues 95–228; the sequence is FEAEKARLRR…AFALQQHKGE (134 aa). Positions 229-256 are linker 2; it reads LEEVRHKRQVDMTTYAKQINDEYQSKLQ. Residues 257–385 form a coil 2 region; the sequence is DQIEEMRAQF…YQALLEGEEE (129 aa). Positions 386 to 566 are tail; that stretch reads RLNLTQEAPQ…SDPADRCSIM (181 aa). An LTD domain is found at 435-550; it reads RRSKLNKETV…DTVSSITVEF (116 aa). Residues 528 to 566 are disordered; that stretch reads GDNPSARLEDSEGDTVSSITVEFSESSDPSDPADRCSIM. Positions 541–556 are enriched in polar residues; sequence DTVSSITVEFSESSDP. At C563 the chain carries Cysteine methyl ester. A lipid anchor (S-farnesyl cysteine) is attached at C563. A propeptide spans 564–566 (removed in mature form); it reads SIM.

The protein belongs to the intermediate filament family. As to quaternary structure, interacts with LEM domain proteins lem-2 and emr-1. May interact with unc-84; this interaction may be required to complete the connection between the nuclear lamina and the cytoskeleton. As to expression, ubiquitous. Expressed in all cells, except in cells undergoing spermatogenesis.

The protein resides in the nucleus envelope. It is found in the nucleus inner membrane. Its function is as follows. Major component of the nuclear lamina, a fibrous layer on the nucleoplasmic side of the inner nuclear membrane. Provides a framework for the nuclear envelope and probably also interacts with chromatin. Essential to maintain the shape and integrity of the nucleus, and for DNA replication. Involved in spatial organization of nuclear pore complexes. It is not a target for ced-3 during apoptosis, suggesting that lamin cleavage is not essential for apoptosis in C.elegans. This is Lamin-1 from Caenorhabditis elegans.